The following is a 451-amino-acid chain: Scaffold protein ILK (451 aa).

Met-1 is modified (N-acetylmethionine). 5 ANK repeats span residues 2-30 (DDIF…LNQG), 31-63 (DDHG…INVM), 64-96 (NRGD…INAV), 97-129 (NEHG…VSIC), and 130-174 (NKYG…GTTR). Positions 33–139 (HGFSPLHWAC…NKYGEMPMDK (107 aa)) are interaction with LIMS1. Position 173 is a phosphothreonine (Thr-173). The interval 180-212 (GTLNKHSGIDFKQLNFLAKLNENHSGELWKGRW) is PH-like; mediates interaction with TGFB1I1. Ser-186 is modified (phosphoserine). The Protein kinase domain occupies 193 to 445 (LNFLAKLNEN…PKFDMIVPIL (253 aa)). 4 residues coordinate ATP: Asn-200, Asn-202, His-203, and Ser-204. Ser-246 carries the post-translational modification Phosphoserine. Residues His-270, Met-272, and Asn-279 each contribute to the ATP site. Asp-339 lines the Mg(2+) pocket. Lys-341 serves as a coordination point for ATP. Residues 363-371 (KKPEDTNRR) carry the Nuclear localization signal motif. An N6-acetyllysine modification is found at Lys-425.

Belongs to the protein kinase superfamily. TKL Ser/Thr protein kinase family. In terms of assembly, component of the heterotrimeric IPP (ILK-PINCH-PARVIN) complex composed of ILK, LIMS1/PINCH and PARVA; the complex binds to F-actin via the C-terminal tail of LIMS1 and the N-terminal region of PARVA, promoting F-actin filament bundling. Formation of the IPP complex is dependent on protein kinase C and precedes integrin-mediated cell adhesion and spreading. ILK also interacts with LIMS2/PINCH2 and with PARVB and PARVG which may substitute for LIMS1 and PARVA in the IPP complex; PARVA and PARVB compete for the same binding site. Interaction with PARVG promotes the establishment of cell polarity required for leukocyte migration. Interacts with the cytoplasmic domain of integrin ITGB1 and may also interact with integrins ITGB2, ITGB3 and/or ITGB5. Interacts probably also with TGFB1I1. Interacts (via ANK repeats) with EPHA1 (via SAM domain); stimulated by EFNA1 but independent of the kinase activity of EPHA1. Interacts with FERMT2. Interacts with LIMD2; leading to activate the protein kinase activity. Interacts with PXN/PAXILLIN (via LD motif 4). Interacts with CCDC25 (via cytoplasmic region); initiating the ILK-PARVB cascade to induce cytoskeleton rearrangement and directional migration of cells. Interacts with IQGAP1; the interaction is required for localization of IQGAP1 to the cell cortex. In terms of processing, phosphorylation by PAK1 modulates ILK subcellular location by promoting its nuclear export.

The protein localises to the cell junction. The protein resides in the focal adhesion. It is found in the cell membrane. It localises to the cell projection. Its subcellular location is the lamellipodium. The protein localises to the cytoplasm. The protein resides in the myofibril. It is found in the sarcomere. It localises to the nucleus. Its subcellular location is the cytoskeleton. The protein localises to the microtubule organizing center. The protein resides in the centrosome. It is found in the cell cortex. In terms of biological role, scaffold protein which mediates protein-protein interactions during a range of cellular events including focal adhesion assembly, cell adhesion and cell migration. Regulates integrin-mediated signal transduction by contributing to inside-out integrin activation. Recruits PARVA and LIMS1/PITCH to form the heterotrimeric IPP (ILK-PINCH-PARVIN) complex which binds to F-actin via the C-terminal tail of LIMS1 and the N-terminal region of PARVA, promoting F-actin filament bundling, a process required to generate force for actin cytoskeleton reorganization and subsequent dynamic cell adhesion events such as cell spreading and migration. Binding to PARVA promotes effective assembly of ILK into focal adhesions while PARVA-bound ILK can simultaneously engage integrin-beta cytoplasmic tails to mediate cell adhesion. Plays a role with PARVG in promoting the cell adhesion and spreading of leukocytes. Acts as an upstream effector of both AKT1/PKB and GSK3. Mediates trafficking of caveolae to the cell surface in an ITGB1-dependent manner by promoting the recruitment of IQGAP1 to the cell cortex which cooperates with its effector DIAPH1 to locally stabilize microtubules and allow stable insertion of caveolae into the plasma membrane. Required for the maintenance of mitotic spindle integrity by promoting phosphorylation of TACC3 by AURKA. Associates with chromatin and may act as a negative regulator of transcription when located in the nucleus. The chain is Scaffold protein ILK from Cavia porcellus (Guinea pig).